The chain runs to 520 residues: MLHYLKKMKKKIFTYFIAIFSGIIGVLAFSPFDYWGCAYLSLLGLIFVAKTAEKKTALWSAFLWGLAFFTFGINWVHVSIHQFGGASVVVSYVLVLVLAAYLALYPMLFAYLIQRFQISSLAMFPVIWTFTEFLRGWLFTGFPWLQFGYSQIDSPFAHLAPMFGVTGVTFFVMWVSAVIFNLLSVLLIKPRKWNVVIANLLLLTLVGGLSAYSSKAEYVRKIEDRDLLVTLAQGNIEQNLKWEPEYLYQTLDIYHKLISQHLGKTDVIILPESALPVLENHIQPFFQGLQAHAQQAGTEIVMGTIYQDKTANKLLNSIITLGNTDFPYSLETTNRYSKHHLVPFGEYVPLETLLRPLGSVFNLPMSAFQSGDEIQSPLVVKNRQLSAAICYEIILGEQLRKNVKQDTDFILTVSNDAWFGDSIGPWQHLQMARMRALEFGKPVIRATNTGISVFIDEQGKIVAQAPQFIETTLTHKVAATEGQTPYAVFGNTAIYGLSLLLLLMRGFGALIRRRLFMPRL.

The next 7 helical transmembrane spans lie at 12 to 32 (IFTYFIAIFSGIIGVLAFSPF), 33 to 53 (DYWGCAYLSLLGLIFVAKTAE), 58 to 78 (LWSAFLWGLAFFTFGINWVHV), 93 to 113 (VLVLVLAAYLALYPMLFAYLI), 122 to 142 (AMFPVIWTFTEFLRGWLFTGF), 168 to 188 (VTFFVMWVSAVIFNLLSVLLI), and 193 to 213 (WNVVIANLLLLTLVGGLSAYS). One can recognise a CN hydrolase domain in the interval 232-479 (AQGNIEQNLK…ETTLTHKVAA (248 aa)). The active-site Proton acceptor is glutamate 272. Lysine 338 is a catalytic residue. Catalysis depends on cysteine 390, which acts as the Nucleophile. The chain crosses the membrane as a helical span at residues 484-504 (TPYAVFGNTAIYGLSLLLLLM).

Belongs to the CN hydrolase family. Apolipoprotein N-acyltransferase subfamily.

It localises to the cell inner membrane. The enzyme catalyses N-terminal S-1,2-diacyl-sn-glyceryl-L-cysteinyl-[lipoprotein] + a glycerophospholipid = N-acyl-S-1,2-diacyl-sn-glyceryl-L-cysteinyl-[lipoprotein] + a 2-acyl-sn-glycero-3-phospholipid + H(+). It functions in the pathway protein modification; lipoprotein biosynthesis (N-acyl transfer). In terms of biological role, catalyzes the phospholipid dependent N-acylation of the N-terminal cysteine of apolipoprotein, the last step in lipoprotein maturation. The protein is Apolipoprotein N-acyltransferase of Pasteurella multocida (strain Pm70).